A 452-amino-acid polypeptide reads, in one-letter code: 1,3-beta-glucanosyltransferase gel1 (452 aa).

The signal sequence occupies residues 1-19 (MKASAVTAALAVGASTVLA). Residues Cys71 and Cys100 are joined by a disulfide bond. Residues Tyr89, Asn159, Glu160, Asp201, and Arg206 each coordinate (1,3-beta-D-glucosyl)n. The active-site Proton donor is Glu160. 2 disulfide bridges follow: Cys215–Cys345 and Cys233–Cys264. Residue Asn249 is glycosylated (N-linked (GlcNAc...) asparagine). Glu261 functions as the Nucleophile in the catalytic mechanism. Residue Tyr292 coordinates (1,3-beta-D-glucosyl)n. Polar residues predominate over residues 325-340 (EKTSNPSGDGNYNKTG). The tract at residues 325-419 (EKTSNPSGDG…SGTSTSSKGA (95 aa)) is disordered. N-linked (GlcNAc...) asparagine glycosylation occurs at Asn337. Low complexity predominate over residues 393-419 (STATAEPGSGSATGSSSSGTSTSSKGA). Ala419 carries the GPI-like-anchor amidated alanine lipid modification. The propeptide at 420–452 (AAGLTVPSLTMAPVVVGAVTLLSTVFGAGLVLL) is removed in mature form.

This sequence belongs to the glycosyl hydrolase 72 family. The GPI-like anchor contains a phosphoceramide lipid group. The anchor position has not been determined.

Its subcellular location is the cell membrane. Splits internally a 1,3-beta-glucan molecule and transfers the newly generated reducing end (the donor) to the non-reducing end of another 1,3-beta-glucan molecule (the acceptor) forming a 1,3-beta linkage, resulting in the elongation of 1,3-beta-glucan chains in the cell wall. Involved in cell wall morphogenesis. The polypeptide is 1,3-beta-glucanosyltransferase gel1 (gel1) (Aspergillus fumigatus (strain CBS 144.89 / FGSC A1163 / CEA10) (Neosartorya fumigata)).